The chain runs to 404 residues: Peroxisomal biogenesis factor 9 (404 aa).

A run of 3 helical transmembrane segments spans residues 73–93 (FLFL…SLVF), 94–114 (LLGV…LLMG), and 149–169 (FGLD…FQVV). Residues 180-214 (DGQRSQQSQNSGMNVASSSRGRHQLVPDRPGSQLS) are disordered. The segment covering 181–198 (GQRSQQSQNSGMNVASSS) has biased composition (polar residues). The chain crosses the membrane as a helical span at residues 349–369 (FFVGLVSWIVDETAACVVFCL).

The protein localises to the peroxisome membrane. Its function is as follows. Essential for the import of peroxisomal matrix proteins. This chain is Peroxisomal biogenesis factor 9 (PEX9), found in Yarrowia lipolytica (strain CLIB 122 / E 150) (Yeast).